Here is a 313-residue protein sequence, read N- to C-terminus: Methionyl-tRNA formyltransferase (313 aa).

Residue 113–116 (SLLP) participates in (6S)-5,6,7,8-tetrahydrofolate binding.

Belongs to the Fmt family.

It catalyses the reaction L-methionyl-tRNA(fMet) + (6R)-10-formyltetrahydrofolate = N-formyl-L-methionyl-tRNA(fMet) + (6S)-5,6,7,8-tetrahydrofolate + H(+). In terms of biological role, attaches a formyl group to the free amino group of methionyl-tRNA(fMet). The formyl group appears to play a dual role in the initiator identity of N-formylmethionyl-tRNA by promoting its recognition by IF2 and preventing the misappropriation of this tRNA by the elongation apparatus. This is Methionyl-tRNA formyltransferase from Francisella tularensis subsp. tularensis (strain FSC 198).